Consider the following 119-residue polypeptide: Large ribosomal subunit protein bL20 (119 aa).

The protein belongs to the bacterial ribosomal protein bL20 family.

Its function is as follows. Binds directly to 23S ribosomal RNA and is necessary for the in vitro assembly process of the 50S ribosomal subunit. It is not involved in the protein synthesizing functions of that subunit. The chain is Large ribosomal subunit protein bL20 from Teredinibacter turnerae (strain ATCC 39867 / T7901).